The primary structure comprises 390 residues: Protein phosphatase methylesterase 1 (390 aa).

Residues 19–50 are disordered; that stretch reads FGLSSLSEDPDESESNSNYFSPTPQPPNELRT. Residues 100–332 form the AB hydrolase-1 domain; sequence PIFICHHGAG…NLIIGQMQGK (233 aa). Residues serine 186, aspartate 213, and histidine 346 contribute to the active site.

It belongs to the AB hydrolase superfamily.

It carries out the reaction [phosphatase 2A protein]-C-terminal L-leucine methyl ester + H2O = [phosphatase 2A protein]-C-terminal L-leucine + methanol + H(+). In terms of biological role, demethylates proteins that have been reversibly carboxymethylated. Demethylates the phosphatase PP2A catalytic subunit. In Debaryomyces hansenii (strain ATCC 36239 / CBS 767 / BCRC 21394 / JCM 1990 / NBRC 0083 / IGC 2968) (Yeast), this protein is Protein phosphatase methylesterase 1 (PPE1).